Reading from the N-terminus, the 340-residue chain is Sodium/bile acid cotransporter 7 (340 aa).

At 1 to 10 (MRLLERVRKE) the chain is on the cytoplasmic side. Residues 11–31 (WFMVGIVVAIGAAKLEPSVGV) form a helical membrane-spanning segment. Topologically, residues 32 to 37 (NGGPLK) are extracellular. A helical transmembrane segment spans residues 38–58 (PEITVSYIAVATIFFNSGLSL). Residues 59-71 (KTEELTSALVHLK) are Cytoplasmic-facing. The helical transmembrane segment at 72 to 92 (LHLFIQVFTLAFFPTTIWLFL) threads the bilayer. Residues 93 to 116 (QLLSVTSINEWLLKGLQTVGCMPP) lie on the Extracellular side of the membrane. Residues 117–137 (PVSSAVILTKAVGGNEAAAIF) traverse the membrane as a helical segment. A topological domain (cytoplasmic) is located at residue Asn-138. The chain crosses the membrane as a helical span at residues 139–159 (SAFGSFLGIVVTPVLLLLFLG). At 160–163 (SSSS) the chain is on the extracellular side. A helical membrane pass occupies residues 164-184 (VPFTSIFSQLFMTVVVPLVIG). The Cytoplasmic segment spans residues 185-201 (QIVRRYIKDWLERKKPP). The chain crosses the membrane as a helical span at residues 202 to 222 (FGVVSSSVLLMIIYTTFCDTF). Over 223 to 234 (SNPNIDLDKFSL) the chain is Extracellular. The chain crosses the membrane as a helical span at residues 235 to 255 (ILILFIIVSIQLSFMLLTFVF). The Cytoplasmic portion of the chain corresponds to 256–270 (STRNNSGFTPADTVA). Residues 271-291 (IIFCSTHKSLTLGIPMLKIVF) form a helical membrane-spanning segment. Topologically, residues 292–298 (AGHEHLS) are extracellular. A helical membrane pass occupies residues 299–319 (LISLPLLIYHPAQILLGSVLV). Topologically, residues 320–340 (PTIKSWMVSRQKGVKLTRPTV) are cytoplasmic.

It belongs to the bile acid:sodium symporter (BASS) (TC 2.A.28) family. Strongly expressed in liver, adrenal gland, small intestine and colon. Moderately expressed in heart, lung, kidney and spleen. Weakly expressed in brain.

The protein localises to the cell membrane. It localises to the endoplasmic reticulum membrane. It is found in the golgi apparatus membrane. Its function is as follows. Involved in teeth and skeletal development. Has an essential role in the biosynthesis and trafficking of glycosaminoglycans and glycoproteins to produce a proper functioning extracellular matrix. Required for extracellular matrix mineralization. Also involved in the regulation of cellular calcium homeostasis. Does not show transport activity towards bile acids or steroid sulfates (including taurocholate, cholate, chenodeoxycholate, estrone-3-sulfate, dehydroepiandrosterone sulfate (DHEAS) and pregnenolone sulfate). In Rattus norvegicus (Rat), this protein is Sodium/bile acid cotransporter 7 (Slc10a7).